The primary structure comprises 376 residues: Chaperone protein DnaJ (376 aa).

The region spanning 5–70 (DYYEILGVSK…QKRAAYDQYG (66 aa)) is the J domain. The CR-type zinc-finger motif lies at 131–209 (GVTKEIRIPT…CHGHGRVERS (79 aa)). Residues Cys-144, Cys-147, Cys-161, Cys-164, Cys-183, Cys-186, Cys-197, and Cys-200 each coordinate Zn(2+). CXXCXGXG motif repeat units follow at residues 144–151 (CDVCHGSG), 161–168 (CPTCHGSG), 183–190 (CPHCQGRG), and 197–204 (CNKCHGHG).

This sequence belongs to the DnaJ family. As to quaternary structure, homodimer. The cofactor is Zn(2+).

It localises to the cytoplasm. Its function is as follows. Participates actively in the response to hyperosmotic and heat shock by preventing the aggregation of stress-denatured proteins and by disaggregating proteins, also in an autonomous, DnaK-independent fashion. Unfolded proteins bind initially to DnaJ; upon interaction with the DnaJ-bound protein, DnaK hydrolyzes its bound ATP, resulting in the formation of a stable complex. GrpE releases ADP from DnaK; ATP binding to DnaK triggers the release of the substrate protein, thus completing the reaction cycle. Several rounds of ATP-dependent interactions between DnaJ, DnaK and GrpE are required for fully efficient folding. Also involved, together with DnaK and GrpE, in the DNA replication of plasmids through activation of initiation proteins. In Shigella flexneri, this protein is Chaperone protein DnaJ.